The sequence spans 561 residues: MDIKRTILIVALAIVSYVMVLKWNQDYGQAALPTQNTAASTANASLPDSVPAGNNGANADLPSVNAQNGTTGLAPAPVAVSKDLIQVKTDVLNLAIDPVGGDIVQLTLPKFPRRQDHPEIPFQLFDNGGERVYLAQSGLIGTDGPDRASGRPLYATEQKSYQLADGQDQLVVDLKFSENGVNYIKRFSLKRGEYDLTVSYLIDNQSAQAWSGNMFAQLKRDASSDPSSSTATGTATYLGAALWTASEPYKKVSMKDMDKGGLQENVAGGWVAWLQHYFVTAWIPSKSDNNAVQTRKDSQGNYIIGYTGPALNVPAGGKVETSAMLYAGPKIQSKLKELSPGLELTVDYGFLWFIAQPIFWLLQHIHSLLGNWGWSIIVLTMLIKGLFFPLSAASYRSMARMRAVAPKLAQLKERFGDDRQKMSQAMMELYKKEKINPLGGCLPILVQMPVFLALYWVLLESVEMRQAPWMLWITDLSIKDPFFILPIIMGATMFIQQRLNPTPPDPMQAKVMKMMPIIFTFFFLWFPAGLVLYWVVNNCLSIAQQWYITRSIEAATKKAAA.

Transmembrane regions (helical) follow at residues 7–27 (ILIVALAIVSYVMVLKWNQDY), 342–362 (LELTVDYGFLWFIAQPIFWLL), 368–388 (LLGNWGWSIIVLTMLIKGLFF), 438–458 (LGGCLPILVQMPVFLALYWVL), 469–489 (WMLWITDLSIKDPFFILPIIM), and 516–536 (PIIFTFFFLWFPAGLVLYWVV).

It belongs to the OXA1/ALB3/YidC family. Type 1 subfamily. As to quaternary structure, interacts with the Sec translocase complex via SecD. Specifically interacts with transmembrane segments of nascent integral membrane proteins during membrane integration.

The protein resides in the cell inner membrane. Its function is as follows. Required for the insertion and/or proper folding and/or complex formation of integral membrane proteins into the membrane. Involved in integration of membrane proteins that insert both dependently and independently of the Sec translocase complex, as well as at least some lipoproteins. Aids folding of multispanning membrane proteins. In Pseudomonas entomophila (strain L48), this protein is Membrane protein insertase YidC.